The primary structure comprises 453 residues: DNA repair protein RadA (453 aa).

A C4-type zinc finger spans residues 10 to 27; it reads CQECGYQSPKYLGRCPNC. 95–102 provides a ligand contact to ATP; it reads GDPGIGKS. The RadA KNRFG motif signature appears at 251–255; that stretch reads KNRFG. A lon-protease-like region spans residues 350-453; it reads DAYLKSAGGV…VGQVLKAVFS (104 aa).

It belongs to the RecA family. RadA subfamily.

In terms of biological role, DNA-dependent ATPase involved in processing of recombination intermediates, plays a role in repairing DNA breaks. Stimulates the branch migration of RecA-mediated strand transfer reactions, allowing the 3' invading strand to extend heteroduplex DNA faster. Binds ssDNA in the presence of ADP but not other nucleotides, has ATPase activity that is stimulated by ssDNA and various branched DNA structures, but inhibited by SSB. Does not have RecA's homology-searching function. In Streptococcus pyogenes serotype M6 (strain ATCC BAA-946 / MGAS10394), this protein is DNA repair protein RadA.